Reading from the N-terminus, the 512-residue chain is MTTGKPNILIIMVDQLNGKLFPDGPADFLHAPNLKALAKRSARFHNNYTSSPLCAPARASFMAGQLPSRTRVYDNAAEYQSSIPTYAHHLRRAGYYTALSGKMHFVGPDQLHGFEERLTTDIYPADFGWTPDYRKPGERIDWWYHNLGSVTGAGVAEITNQMEYDDEVAFLANQKLYQLSRENDDESRRPWCLTVSFTHPHDPYVARRKFWDLYEDCEHLTPEVGAIPLDEQDPHSQRIMLSCDYQNFDVTEENVRRSRRAYFANISYLDEKVGELIDTLTRTRMLDDTLILFCSDHGDMLGERGLWFKMNFFEGSARVPLMIAGPGIAPGLHLTPTSNLDVTPTLADLAGISLEEVRPWTDGVSLVPMVNGVERTEPVLMEYAAEASYAPLVAIREGKWKYVYCALDPEQLFDLEADPLELTNLAENPRGPVDQATLTAFRDMRAAHWDMEAFDAAVRESQARRWVVYEALRNGAYYPWDHQPLQKASERYMRNHMNLDTLEESKRYPRGE.

Positions 14, 15, and 54 each coordinate Ca(2+). Cys-54 functions as the Nucleophile in the catalytic mechanism. Cys-54 carries the post-translational modification 3-oxoalanine (Cys). The active site involves His-104. Residues Asp-296 and His-297 each coordinate Ca(2+).

It belongs to the sulfatase family. Ca(2+) serves as cofactor. In terms of processing, the conversion to 3-oxoalanine (also known as C-formylglycine, FGly), of a serine or cysteine residue in prokaryotes and of a cysteine residue in eukaryotes, is critical for catalytic activity.

The catalysed reaction is choline sulfate + H2O = choline + sulfate + H(+). Its pathway is amine and polyamine biosynthesis; choline biosynthesis; choline from choline sulfate: step 1/1. Its function is as follows. Converts choline-O-sulfate into choline. In Rhizobium meliloti (strain 1021) (Ensifer meliloti), this protein is Choline-sulfatase (betC).